A 176-amino-acid chain; its full sequence is Ferritin, higher subunit (176 aa).

In terms of domain architecture, Ferritin-like diiron spans 7–156 (QNFHRDCEAA…DYITNLKRLG (150 aa)). Fe cation-binding residues include Glu-24, Glu-58, Glu-59, His-62, Glu-104, and Gln-138.

The protein belongs to the ferritin family. As to quaternary structure, oligomer of 24 subunits. The functional molecule is roughly spherical and contains a central cavity into which the polymeric mineral iron core is deposited.

The enzyme catalyses 4 Fe(2+) + O2 + 4 H(+) = 4 Fe(3+) + 2 H2O. Its function is as follows. Stores iron in a soluble, non-toxic, readily available form. Important for iron homeostasis. Has ferroxidase activity. Iron is taken up in the ferrous form and deposited as ferric hydroxides after oxidation. The chain is Ferritin, higher subunit from Aquarana catesbeiana (American bullfrog).